The following is a 321-amino-acid chain: Glycerol-3-phosphate phosphatase (321 aa).

Asp34 (nucleophile) is an active-site residue. The Mg(2+) site is built by Asp34, Asp36, and Asp260. Catalysis depends on Asp36, which acts as the Proton donor.

This sequence belongs to the HAD-like hydrolase superfamily. CbbY/CbbZ/Gph/YieH family. As to quaternary structure, homodimer. It depends on Mg(2+) as a cofactor. In terms of tissue distribution, expression was confirmed in liver, adipose tissue, testis and pancreatic islet.

The catalysed reaction is O-phospho-L-tyrosyl-[protein] + H2O = L-tyrosyl-[protein] + phosphate. It catalyses the reaction sn-glycerol 1-phosphate + H2O = glycerol + phosphate. It carries out the reaction sn-glycerol 3-phosphate + H2O = glycerol + phosphate. In terms of biological role, glycerol-3-phosphate phosphatase hydrolyzing glycerol-3-phosphate into glycerol. Thereby, regulates the cellular levels of glycerol-3-phosphate a metabolic intermediate of glucose, lipid and energy metabolism. Was also shown to have a 2-phosphoglycolate phosphatase activity and a tyrosine-protein phosphatase activity. However, their physiological relevance is unclear. In vitro, also has a phosphatase activity toward ADP, ATP, GDP and GTP. The sequence is that of Glycerol-3-phosphate phosphatase from Rattus norvegicus (Rat).